The primary structure comprises 149 residues: Inner membrane protein YdcZ (149 aa).

Topologically, residues 1–4 (MNQS) are periplasmic. The chain crosses the membrane as a helical span at residues 5 to 25 (LTLAFLIAAGIGLVVQNTLMV). The Cytoplasmic segment spans residues 26 to 33 (RITQTSST). Residues 34 to 54 (ILIAMLLNSLVGIVLFVSILW) traverse the membrane as a helical segment. Topologically, residues 55 to 70 (FKQGMAGFGELVSSVR) are periplasmic. Residues 71–91 (WWTLIPGLLGSFFVFASISGY) form a helical membrane-spanning segment. Over 92 to 93 (QN) the chain is Cytoplasmic. The chain crosses the membrane as a helical span at residues 94-114 (VGAATTIAVLVASQLIGGLML). At 115–123 (DIFRSHGVP) the chain is on the periplasmic side. A helical transmembrane segment spans residues 124-144 (LRALFGPICGAILLVVGAWLV). Residues 145–149 (ARRSF) are Cytoplasmic-facing.

The protein resides in the cell inner membrane. In Escherichia coli (strain K12), this protein is Inner membrane protein YdcZ (ydcZ).